A 67-amino-acid polypeptide reads, in one-letter code: Large ribosomal subunit protein bL35 (67 aa).

It belongs to the bacterial ribosomal protein bL35 family.

This Rickettsia prowazekii (strain Madrid E) protein is Large ribosomal subunit protein bL35.